We begin with the raw amino-acid sequence, 263 residues long: Putative TATA-binding protein pB263R (263 aa).

Belongs to the asfivirus B263R family.

Its function is as follows. Putative TATA-binding protein. This chain is Putative TATA-binding protein pB263R, found in Ornithodoros (relapsing fever ticks).